The primary structure comprises 511 residues: Cobyric acid synthase (511 aa).

Positions 251–443 (LLDIAIICLP…IHGIFDNDVF (193 aa)) constitute a GATase cobBQ-type domain. Cysteine 332 serves as the catalytic Nucleophile. Residue histidine 435 is part of the active site.

Belongs to the CobB/CobQ family. CobQ subfamily.

Its pathway is cofactor biosynthesis; adenosylcobalamin biosynthesis. Catalyzes amidations at positions B, D, E, and G on adenosylcobyrinic A,C-diamide. NH(2) groups are provided by glutamine, and one molecule of ATP is hydrogenolyzed for each amidation. This Listeria monocytogenes serovar 1/2a (strain ATCC BAA-679 / EGD-e) protein is Cobyric acid synthase.